A 574-amino-acid chain; its full sequence is Amino-acid acetyltransferase, mitochondrial (574 aa).

The N-terminal 13 residues, 1–13 (MWRRIFAHGLKYD), are a transit peptide targeting the mitochondrion. The N-acetyltransferase domain maps to 392–560 (KGAKPSNNSP…KRLREFMRSV (169 aa)).

It belongs to the acetyltransferase family. In terms of assembly, interacts with the acetylglutamate kinase chain of AGR5,6.

The protein resides in the mitochondrion. The enzyme catalyses L-glutamate + acetyl-CoA = N-acetyl-L-glutamate + CoA + H(+). Its pathway is amino-acid biosynthesis; L-arginine biosynthesis; N(2)-acetyl-L-ornithine from L-glutamate: step 1/4. Feedback inhibition by L-arginine. In terms of biological role, N-acetylglutamate synthase involved in arginine biosynthesis. In Saccharomyces cerevisiae (strain YJM789) (Baker's yeast), this protein is Amino-acid acetyltransferase, mitochondrial (ARG2).